A 275-amino-acid chain; its full sequence is Diaminopimelate epimerase (275 aa).

Substrate contacts are provided by Asn-12, Gln-45, and Asn-65. Cys-74 (proton donor) is an active-site residue. Substrate contacts are provided by residues 75 to 76, Asn-158, Asn-191, and 209 to 210; these read GN and ER. Residue Cys-218 is the Proton acceptor of the active site. A substrate-binding site is contributed by 219–220; that stretch reads GT.

It belongs to the diaminopimelate epimerase family. In terms of assembly, homodimer.

The protein localises to the cytoplasm. It catalyses the reaction (2S,6S)-2,6-diaminopimelate = meso-2,6-diaminopimelate. It functions in the pathway amino-acid biosynthesis; L-lysine biosynthesis via DAP pathway; DL-2,6-diaminopimelate from LL-2,6-diaminopimelate: step 1/1. Functionally, catalyzes the stereoinversion of LL-2,6-diaminopimelate (L,L-DAP) to meso-diaminopimelate (meso-DAP), a precursor of L-lysine and an essential component of the bacterial peptidoglycan. This is Diaminopimelate epimerase from Shewanella oneidensis (strain ATCC 700550 / JCM 31522 / CIP 106686 / LMG 19005 / NCIMB 14063 / MR-1).